Consider the following 64-residue polypeptide: Movement protein TGBp3 (64 aa).

Residues 1-4 (MRSV) lie on the Lumenal side of the membrane. Residues 5–27 (ALTLCAIIAGYLLVSNLQNVFSP) traverse the membrane as a helical segment. The Cytoplasmic portion of the chain corresponds to 28–64 (EVCTLVITGESIRINGCNLSPAHFRAISHLKVLQIHL).

This sequence belongs to the Tymovirales TGBp3 protein family.

It localises to the host endoplasmic reticulum membrane. Its function is as follows. Plays a role in viral cell-to-cell propagation, by facilitating genome transport to neighboring plant cells through plasmosdesmata. May induce the formation of granular vesicles derived from the Endoplasmic reticulum, which align on actin filaments. This chain is Movement protein TGBp3, found in Lily symptomless virus (LSV).